The sequence spans 124 residues: Acidic phospholipase A2 (124 aa).

Cystine bridges form between Cys26/Cys116, Cys28/Cys44, Cys43/Cys95, Cys49/Cys124, Cys50/Cys88, Cys57/Cys81, and Cys75/Cys86. 3 residues coordinate Ca(2+): Tyr27, Gly29, and Gly31. The active site involves His47. Asp48 serves as a coordination point for Ca(2+). The active site involves Asp89.

This sequence belongs to the phospholipase A2 family. Group II subfamily. D49 sub-subfamily. The cofactor is Ca(2+). As to expression, expressed by the venom gland.

It is found in the secreted. It catalyses the reaction a 1,2-diacyl-sn-glycero-3-phosphocholine + H2O = a 1-acyl-sn-glycero-3-phosphocholine + a fatty acid + H(+). In terms of biological role, snake venom phospholipase A2 (PLA2) that inhibits ADP-induced platelet aggregation. PLA2 catalyzes the calcium-dependent hydrolysis of the 2-acyl groups in 3-sn-phosphoglycerides. This chain is Acidic phospholipase A2, found in Gloydius ussuriensis (Ussuri mamushi).